The chain runs to 300 residues: Probable ABC transporter permease protein YurM (300 aa).

The next 6 helical transmembrane spans lie at 37–57 (VWVF…WMVM), 98–118 (VIVT…AAYG), 129–149 (FFLV…LVPL), 161–181 (TYWA…IILI), 204–224 (FGVF…TSGI), and 264–284 (WGVL…LFLL). Residues 94 to 285 (FMNSVIVTAL…APIIILFLLM (192 aa)) form the ABC transmembrane type-1 domain.

The protein belongs to the binding-protein-dependent transport system permease family. MalFG subfamily.

It is found in the cell membrane. Functionally, probably part of the binding-protein-dependent transport system YurMNO. Probably responsible for the translocation of the substrate across the membrane. This Bacillus subtilis (strain 168) protein is Probable ABC transporter permease protein YurM (yurM).